The chain runs to 1287 residues: SCL-interrupting locus protein (1287 aa).

An N-acetylmethionine modification is found at Met-1. The interval 1 to 1018 is interaction with RBM14; sequence MEPIYPFARP…IDSPTKVKKN (1018 aa). The segment at 231 to 781 is interaction with CPAP; sequence YKYGYLTMDE…VSVEAQSSPG (551 aa). 2 disordered regions span residues 378-417 and 508-533; these read RSSQ…SQKI and PPAY…PSHD. Ser-395 is subject to Phosphoserine. Residues 517 to 529 are compositionally biased toward polar residues; the sequence is HTRNSIKPSSHNG. A PIN1-binding region spans residues 584 to 779; sequence PMELQIPTPP…ELVSVEAQSS (196 aa). Phosphoserine occurs at positions 753, 779, and 1135.

Homodimer. Interacts with PIN1 via its WW domain. This interaction is dependent on STIL mitotic phosphorylation. Interacts with CPAP. Interacts with RBM14 and this interaction interferes with the interaction of STIL with CPAP. Forms a complex with CPAP and SASS6. Interacts (via N-terminus) with CEP85; this interaction is essential for efficient centriolar targeting of STIL and subsequent PLK4 activation. Ubiquitinated. Post-translationally, phosphorylated following the activation of the mitotic checkpoint. In terms of tissue distribution, expressed in all hematopoietic tissues and cell lines. Highly expressed in a variety of tumors characterized by increased mitotic activity with highest expression in lung cancer.

Its subcellular location is the cytoplasm. It localises to the cytosol. The protein resides in the cytoskeleton. It is found in the microtubule organizing center. The protein localises to the centrosome. Its subcellular location is the centriole. It localises to the cell cortex. Functionally, immediate-early gene. Plays an important role in embryonic development as well as in cellular growth and proliferation; its long-term silencing affects cell survival and cell cycle distribution as well as decreases CDK1 activity correlated with reduced phosphorylation of CDK1. Plays a role as a positive regulator of the sonic hedgehog pathway, acting downstream of PTCH1. Plays an important role in the regulation of centriole duplication. Required for the onset of procentriole formation and proper mitotic progression. During procentriole formation, is essential for the correct loading of SASS6 and CPAP to the base of the procentriole to initiate procentriole assembly. In complex with STIL acts as a modulator of PLK4-driven cytoskeletal rearrangements and directional cell motility. This chain is SCL-interrupting locus protein (STIL), found in Homo sapiens (Human).